A 585-amino-acid polypeptide reads, in one-letter code: Mitochondrial sodium/calcium exchanger protein (585 aa).

The first 26 residues, 1–26, serve as a signal peptide directing secretion; sequence MAGRWLDPLWAPGFLCVALILETASG. Over 27–95 the chain is Extracellular; it reads AGDLSTKAHG…GIFCYFPPNL (69 aa). Asn-46 is a glycosylation site (N-linked (GlcNAc...) asparagine). A helical transmembrane segment spans residues 96 to 116; it reads LPLAITLYVFWLLYLFLILGV. Residues 117–140 lie on the Cytoplasmic side of the membrane; that stretch reads TAAKFFCPNLSAISTSLKLSHNVA. The chain crosses the membrane as a helical span at residues 141–161; that stretch reads GVTFLAFGNGAPDIFSALVAF. Residues 162-168 lie on the Extracellular side of the membrane; sequence SDPRTAG. The chain crosses the membrane as a helical span at residues 169 to 189; sequence LAIGALFGAGVLVTTVVAGGI. At 190–205 the chain is on the cytoplasmic side; the sequence is TILRPFMAASRPFLRD. A helical transmembrane segment spans residues 206-226; sequence ITFYMVAVFLTFTALYLGRIT. Position 227 (Leu-227) is a topological domain, extracellular. A helical transmembrane segment spans residues 228 to 247; that stretch reads VWALGYLGLYVFYVVTVIIC. The Cytoplasmic segment spans residues 248 to 325; sequence TWVYQRQRSR…KWRTQSISCK (78 aa). A Phosphoserine; by PKA modification is found at Ser-258. The chain crosses the membrane as a helical span at residues 326 to 346; that stretch reads LLKVAKLPVEFLLLLTVPVVD. Topologically, residues 347-360 are extracellular; that stretch reads PDKDDRNWKRPLNC. Residues 361-381 traverse the membrane as a helical segment; that stretch reads LQLVISPLVLVLTLQSGVYGI. The Cytoplasmic segment spans residues 382-383; that stretch reads YE. A helical membrane pass occupies residues 384 to 404; it reads IGGLLPVWAVVVIVGTALASV. Residues 405–416 lie on the Extracellular side of the membrane; the sequence is TFFATSNSEPPR. A helical membrane pass occupies residues 417-437; it reads LHWLFAFLGFLTSALWINAAA. The Cytoplasmic portion of the chain corresponds to 438 to 445; sequence TEVVNILR. Residues 446-466 traverse the membrane as a helical segment; that stretch reads SLGVVFRLSNTVLGLTLLAWG. At 467–491 the chain is on the extracellular side; it reads NSIGDAFSDFTLARQGYPRMAFSAC. The chain crosses the membrane as a helical span at residues 492–512; the sequence is FGGIIFNILVGVGLGCLLQIV. Topologically, residues 513–525 are cytoplasmic; sequence RSHASEVKLEPDG. The chain crosses the membrane as a helical span at residues 526-546; that stretch reads LLVWVLASALGLSLVFSLVSV. Residues 547–559 lie on the Extracellular side of the membrane; it reads PLQCFQLSKAYGL. Residues 560 to 580 form a helical membrane-spanning segment; it reads CLLLFYICFIVVVLLTEFGVI. Residues 581-585 lie on the Cytoplasmic side of the membrane; sequence HLKAD.

This sequence belongs to the Ca(2+):cation antiporter (CaCA) (TC 2.A.19) family. SLC24A subfamily. In terms of processing, phosphorylation at Ser-258 by PKA prevents calcium overload. Widely expressed. Present at higher level in pancreas, stomach, skeletal muscle and skin (at protein level). Ubiquitously expressed.

Its subcellular location is the mitochondrion inner membrane. The enzyme catalyses Ca(2+)(in) + 3 Na(+)(out) = Ca(2+)(out) + 3 Na(+)(in). It catalyses the reaction 3 Li(+)(out) + Ca(2+)(in) = 3 Li(+)(in) + Ca(2+)(out). With respect to regulation, inhibited by the sodium/calcium exchanger inhibitor CGP-37157. Strongly inhibited by zinc. Its function is as follows. Mitochondrial sodium/calcium antiporter that mediates sodium-dependent calcium efflux from mitochondrion, by mediating the exchange of 3 sodium ions per 1 calcium ion. Plays a central role in mitochondrial calcium homeostasis by mediating mitochondrial calcium extrusion: calcium efflux is essential for mitochondrial function and cell survival, notably in cardiomyocytes. Regulates rates of glucose-dependent insulin secretion in pancreatic beta-cells during the first phase of insulin secretion: acts by mediating efflux of calcium from mitochondrion, thereby affecting cytoplasmic calcium responses. Required for store-operated Ca(2+) entry (SOCE) and Ca(2+) release-activated Ca(2+) (CRAC) channel regulation: sodium transport by SLC8B1 leads to promote calcium-shuttling that modulates mitochondrial redox status, thereby regulating SOCE activity. Involved in B-lymphocyte chemotaxis. Able to transport Ca(2+) in exchange of either Li(+) or Na(+), explaining how Li(+) catalyzes Ca(2+) exchange. In contrast to other members of the family its function is independent of K(+). This chain is Mitochondrial sodium/calcium exchanger protein, found in Rattus norvegicus (Rat).